Reading from the N-terminus, the 1099-residue chain is Adenylate-forming reductase Nps11 (1099 aa).

Residues Ala-29–Met-360 form an adenylation (A) domain region. AMP-binding positions include His-244, Asn-347–Val-348, Thr-352, and Leu-432–Arg-435. One can recognise a Carrier domain in the interval Trp-578–Val-664. Position 613 is an O-(pantetheine 4'-phosphoryl)serine (Ser-613). A reductase (R) domain region spans residues Leu-717–Val-952. NADP(+) contacts are provided by residues Thr-721–Leu-724, Asn-809–Trp-811, Tyr-883, and Lys-887.

This sequence belongs to the adenylate-forming reductase family.

In terms of biological role, adenylate-forming reductase, a natural product biosynthesis enzyme that resembles non-ribosomal peptide synthetases, yet serves to modify one substrate, rather than to condense two or more building blocks. The A-domain preferentially accepts benzoic acid as substrate. The natural product of the enzyme is not yet known. The sequence is that of Adenylate-forming reductase Nps11 from Serpula lacrymans var. lacrymans (strain S7.9) (Dry rot fungus).